A 567-amino-acid chain; its full sequence is Proline--tRNA ligase (567 aa).

Belongs to the class-II aminoacyl-tRNA synthetase family. ProS type 1 subfamily. Homodimer.

It localises to the cytoplasm. The catalysed reaction is tRNA(Pro) + L-proline + ATP = L-prolyl-tRNA(Pro) + AMP + diphosphate. Functionally, catalyzes the attachment of proline to tRNA(Pro) in a two-step reaction: proline is first activated by ATP to form Pro-AMP and then transferred to the acceptor end of tRNA(Pro). As ProRS can inadvertently accommodate and process non-cognate amino acids such as alanine and cysteine, to avoid such errors it has two additional distinct editing activities against alanine. One activity is designated as 'pretransfer' editing and involves the tRNA(Pro)-independent hydrolysis of activated Ala-AMP. The other activity is designated 'posttransfer' editing and involves deacylation of mischarged Ala-tRNA(Pro). The misacylated Cys-tRNA(Pro) is not edited by ProRS. This chain is Proline--tRNA ligase, found in Staphylococcus epidermidis (strain ATCC 35984 / DSM 28319 / BCRC 17069 / CCUG 31568 / BM 3577 / RP62A).